The primary structure comprises 291 residues: Succinate--CoA ligase [ADP-forming] subunit alpha 1 (291 aa).

CoA contacts are provided by residues 20-23 (TGFQ), K46, and 99-101 (VTE). Residue Y162 coordinates substrate. Catalysis depends on H249, which acts as the Tele-phosphohistidine intermediate.

Belongs to the succinate/malate CoA ligase alpha subunit family. In terms of assembly, heterotetramer of two alpha and two beta subunits.

It carries out the reaction succinate + ATP + CoA = succinyl-CoA + ADP + phosphate. The catalysed reaction is GTP + succinate + CoA = succinyl-CoA + GDP + phosphate. The protein operates within carbohydrate metabolism; tricarboxylic acid cycle; succinate from succinyl-CoA (ligase route): step 1/1. In terms of biological role, succinyl-CoA synthetase functions in the citric acid cycle (TCA), coupling the hydrolysis of succinyl-CoA to the synthesis of either ATP or GTP and thus represents the only step of substrate-level phosphorylation in the TCA. The alpha subunit of the enzyme binds the substrates coenzyme A and phosphate, while succinate binding and nucleotide specificity is provided by the beta subunit. This Archaeoglobus fulgidus (strain ATCC 49558 / DSM 4304 / JCM 9628 / NBRC 100126 / VC-16) protein is Succinate--CoA ligase [ADP-forming] subunit alpha 1.